Consider the following 589-residue polypeptide: Poly(3-hydroxyalkanoate) polymerase subunit PhaC (589 aa).

The interval 1 to 23 is disordered; it reads MATGKGAAASTQEGKSQPFKVTP. Cys319 is a catalytic residue.

This sequence belongs to the PHA/PHB synthase family. Type I PhaC subfamily. In terms of assembly, monomer.

The protein resides in the cytoplasm. The catalysed reaction is (3R)-3-hydroxybutanoyl-CoA + [(3R)-hydroxybutanoate](n) = [(3R)-hydroxybutanoate](n+1) + CoA. It participates in biopolymer metabolism; poly-(R)-3-hydroxybutanoate biosynthesis. Functionally, polymerizes (R)-3-hydroxybutyryl-CoA to create polyhydroxybutyrate (PHB) which consists of thousands of hydroxybutyrate molecules linked end to end. PHB serves as an intracellular energy reserve material when cells grow under conditions of nutrient limitation. This Cupriavidus necator (strain ATCC 17699 / DSM 428 / KCTC 22496 / NCIMB 10442 / H16 / Stanier 337) (Ralstonia eutropha) protein is Poly(3-hydroxyalkanoate) polymerase subunit PhaC.